The primary structure comprises 379 residues: MSALRPPARGGLGLSRLGVRLAGSRRFQLIAERVPFLRRIGRREGEELFDIVAGFVHSQVLYALVELRVLHLVAEGPQTVQALAAATGLAPERMQLLLQGGAALKLLTRRRDGQFDLAVRGAAFLAVPGLEAMVGHHHVLYRDLADPVAFLKGETEPELARFWPYVFGAGGATDPEVTAKYSRLMTESQGLVAEDALRLVDLMGVRRLMDVGGGTGAFLAAVGRAYPLMELMLFDLPVVAEAAPQRLTEAGLAGRFTVHGGSFRDDPLPLGADAISLVRVLFDHSDETVKLLLHRVREALPAGGRVIVAEAMSGGARPHRETDTYMAFYTAAMRTGRVRSAAEIAELLTGQGFSEIKIFPGLRPYVASAVTAVRPSDAP.

S-adenosyl-L-methionine-binding residues include Asp-235 and Arg-279.

This sequence belongs to the class I-like SAM-binding methyltransferase superfamily. Cation-independent O-methyltransferase family.

It catalyses the reaction demethylspheroidene + S-adenosyl-L-methionine = spheroidene + S-adenosyl-L-homocysteine + H(+). Its pathway is carotenoid biosynthesis; spheroidene biosynthesis. Methyltransferase that mediates the O-methylation of 1-hydroxy carotenoids. Converts hydroxyneurosporene to methoxyneurosporene or demethylspheroidene to spheroidene. Also able to produce spirilloxanthin. The polypeptide is Demethylspheroidene O-methyltransferase (crtF) (Cereibacter sphaeroides (strain ATCC 17023 / DSM 158 / JCM 6121 / CCUG 31486 / LMG 2827 / NBRC 12203 / NCIMB 8253 / ATH 2.4.1.) (Rhodobacter sphaeroides)).